A 513-amino-acid chain; its full sequence is Zinc finger CCCH-type with G patch domain-containing protein (513 aa).

A C3H1-type zinc finger spans residues 155–178 (PCSYYLEGECRFDETKCRFSHGAL). The span at 252–261 (DQEEDDELSS) shows a compositional bias: acidic residues. The interval 252–282 (DQEEDDELSSEESNSSMNNESSDEAESDMDD) is disordered. A compositionally biased stretch (low complexity) spans 262-271 (EESNSSMNNE). The span at 272-282 (SSDEAESDMDD) shows a compositional bias: acidic residues. The G-patch domain maps to 312–358 (TRGIGSKLMEKMGYIHGTGLGSDGRGIVTPVSAQILPQGRSLDACME). Residues 478–495 (VQMQSHKQELATLQAQER) are compositionally biased toward polar residues. A disordered region spans residues 478–513 (VQMQSHKQELATLQAQERSLSKEQQTRKSKNKMFEF). Over residues 496-513 (SLSKEQQTRKSKNKMFEF) the composition is skewed to basic and acidic residues.

The protein resides in the nucleus. Functionally, transcription repressor. This Drosophila erecta (Fruit fly) protein is Zinc finger CCCH-type with G patch domain-containing protein.